We begin with the raw amino-acid sequence, 74 residues long: MKSGIHPDYVETTVLCGCGASFTTRSTKQSGQITVEVCSQCHPFYTGKQKILDSGGRVARFEKRYGKRKTTADK.

Zn(2+) contacts are provided by Cys-16, Cys-18, Cys-38, and Cys-41.

The protein belongs to the bacterial ribosomal protein bL31 family. Type A subfamily. In terms of assembly, part of the 50S ribosomal subunit. Zn(2+) is required as a cofactor.

Functionally, binds the 23S rRNA. The protein is Large ribosomal subunit protein bL31 of Mycolicibacterium vanbaalenii (strain DSM 7251 / JCM 13017 / BCRC 16820 / KCTC 9966 / NRRL B-24157 / PYR-1) (Mycobacterium vanbaalenii).